Consider the following 441-residue polypeptide: ATP-dependent protease ATPase subunit HslU (441 aa).

Residues Ile-18, Gly-60 to Glu-65, Asp-254, Glu-319, and Arg-391 each bind ATP.

Belongs to the ClpX chaperone family. HslU subfamily. In terms of assembly, a double ring-shaped homohexamer of HslV is capped on each side by a ring-shaped HslU homohexamer. The assembly of the HslU/HslV complex is dependent on binding of ATP.

The protein localises to the cytoplasm. Its function is as follows. ATPase subunit of a proteasome-like degradation complex; this subunit has chaperone activity. The binding of ATP and its subsequent hydrolysis by HslU are essential for unfolding of protein substrates subsequently hydrolyzed by HslV. HslU recognizes the N-terminal part of its protein substrates and unfolds these before they are guided to HslV for hydrolysis. The chain is ATP-dependent protease ATPase subunit HslU from Shewanella pealeana (strain ATCC 700345 / ANG-SQ1).